The primary structure comprises 297 residues: Lipoprotein NlpD/LppB homolog (297 aa).

An N-terminal signal peptide occupies residues 1–22 (MDKGEGLRLAATLRQWTRLYGG). Cysteine 23 carries N-palmitoyl cysteine lipidation. Cysteine 23 is lipidated: S-diacylglycerol cysteine. The LysM domain occupies 67–111 (GQYIVRRGDTLYSIAFRFGWDWKALAARNGIAPPYTIQVGQAIQF). Residues 134–168 (TKPTPVPPAVSTSVPAKPAPAPASTTTPPSSGATP) are disordered.

The protein belongs to the E.coli NlpD/Haemophilus LppB family.

It is found in the cell inner membrane. The protein is Lipoprotein NlpD/LppB homolog of Pseudomonas aeruginosa (strain ATCC 15692 / DSM 22644 / CIP 104116 / JCM 14847 / LMG 12228 / 1C / PRS 101 / PAO1).